We begin with the raw amino-acid sequence, 1412 residues long: DNA-directed RNA polymerase subunit beta (1412 aa).

This sequence belongs to the RNA polymerase beta chain family. As to quaternary structure, the RNAP catalytic core consists of 2 alpha, 1 beta, 1 beta' and 1 omega subunit. When a sigma factor is associated with the core the holoenzyme is formed, which can initiate transcription.

It catalyses the reaction RNA(n) + a ribonucleoside 5'-triphosphate = RNA(n+1) + diphosphate. DNA-dependent RNA polymerase catalyzes the transcription of DNA into RNA using the four ribonucleoside triphosphates as substrates. The sequence is that of DNA-directed RNA polymerase subunit beta from Bdellovibrio bacteriovorus (strain ATCC 15356 / DSM 50701 / NCIMB 9529 / HD100).